Consider the following 609-residue polypeptide: Tyrosine-protein kinase transforming protein Fes (609 aa).

2 disordered regions span residues 1–20 and 152–208; these read AARA…PQGH and RDSA…GGRT. Residues 8-174 form the F-BAR; degenerate domain; the sequence is MGFSSELCSP…SKDKDRDKAK (167 aa). 2 stretches are compositionally biased toward basic and acidic residues: residues 160–175 and 190–206; these read KYQE…KAKL and QDDR…REGG. In terms of domain architecture, SH2 spans 247-336; sequence WYHGALPRAE…KSGIVLNRAV (90 aa). The Protein kinase domain occupies 348-609; the sequence is LVLGEQIGRG…ELQSIRKRHR (262 aa). ATP-binding positions include 354-362 and lysine 377; that span reads IGRGNFGEV. Aspartate 470 (proton acceptor) is an active-site residue. Tyrosine 500 bears the Phosphotyrosine; by autocatalysis mark.

It belongs to the protein kinase superfamily. Tyr protein kinase family. Fes/fps subfamily.

The enzyme catalyses L-tyrosyl-[protein] + ATP = O-phospho-L-tyrosyl-[protein] + ADP + H(+). This is Tyrosine-protein kinase transforming protein Fes (V-FES) from Felidae (cat family).